The sequence spans 226 residues: LexA repressor (226 aa).

A DNA-binding region (H-T-H motif) is located at residues methionine 42 to asparagine 62. Active-site for autocatalytic cleavage activity residues include serine 150 and lysine 187.

This sequence belongs to the peptidase S24 family. In terms of assembly, homodimer.

It carries out the reaction Hydrolysis of Ala-|-Gly bond in repressor LexA.. In terms of biological role, represses a number of genes involved in the response to DNA damage (SOS response), including recA and lexA. In the presence of single-stranded DNA, RecA interacts with LexA causing an autocatalytic cleavage which disrupts the DNA-binding part of LexA, leading to derepression of the SOS regulon and eventually DNA repair. The chain is LexA repressor from Clavibacter sepedonicus (Clavibacter michiganensis subsp. sepedonicus).